Reading from the N-terminus, the 315-residue chain is uncharacterized protein (315 aa).

It belongs to the carbohydrate kinase PfkB family.

This is an uncharacterized protein from Escherichia coli (strain K12).